An 828-amino-acid polypeptide reads, in one-letter code: Outer membrane usher protein MrkC (828 aa).

A signal peptide spans 1–18 (MKQRSICPGRLSTAIAVA). C813 and C827 form a disulfide bridge.

The protein belongs to the fimbrial export usher family.

The protein localises to the cell outer membrane. Functionally, involved in the export and assembly of the type 3 fimbrial subunit (MrkA). The protein is Outer membrane usher protein MrkC (mrkC) of Klebsiella pneumoniae.